Consider the following 113-residue polypeptide: Pancreatic progenitor cell differentiation and proliferation factor B (113 aa).

Belongs to the PPDPF family.

Probable regulator of exocrine pancreas development. This is Pancreatic progenitor cell differentiation and proliferation factor B (ppdpf-b) from Xenopus laevis (African clawed frog).